A 251-amino-acid polypeptide reads, in one-letter code: Triosephosphate isomerase (251 aa).

Residue 9-11 participates in substrate binding; it reads NWK. Residue His95 is the Electrophile of the active site. Glu167 (proton acceptor) is an active-site residue. Residues Gly173, Ser213, and 234–235 contribute to the substrate site; that span reads GG.

This sequence belongs to the triosephosphate isomerase family. As to quaternary structure, homodimer.

It localises to the cytoplasm. The enzyme catalyses D-glyceraldehyde 3-phosphate = dihydroxyacetone phosphate. It participates in carbohydrate biosynthesis; gluconeogenesis. The protein operates within carbohydrate degradation; glycolysis; D-glyceraldehyde 3-phosphate from glycerone phosphate: step 1/1. In terms of biological role, involved in the gluconeogenesis. Catalyzes stereospecifically the conversion of dihydroxyacetone phosphate (DHAP) to D-glyceraldehyde-3-phosphate (G3P). This chain is Triosephosphate isomerase, found in Pediococcus pentosaceus (strain ATCC 25745 / CCUG 21536 / LMG 10740 / 183-1w).